Consider the following 362-residue polypeptide: Probable cysteine protease RDL2 (362 aa).

The first 28 residues, 1–28 (MAATPIRVIVSALVILSVLLLSSSLGVA), serve as a signal peptide directing secretion. Positions 29–129 (TETEIERNET…ERYLYKEGDV (101 aa)) are cleaved as a propeptide — activation peptide. Residue N36 is glycosylated (N-linked (GlcNAc...) asparagine). Disulfide bonds link C151-C194 and C185-C228. Residue C154 is part of the active site. N234 is a glycosylation site (N-linked (GlcNAc...) asparagine). C287 and C338 are disulfide-bonded. Residues H293 and N313 contribute to the active site.

The protein belongs to the peptidase C1 family.

Probable thiol protease. The polypeptide is Probable cysteine protease RDL2 (Arabidopsis thaliana (Mouse-ear cress)).